Reading from the N-terminus, the 160-residue chain is Phosphopantetheine adenylyltransferase (160 aa).

Thr-9 contributes to the substrate binding site. ATP is bound by residues 9 to 10 (TF) and His-17. Positions 41, 73, and 87 each coordinate substrate. Residues 88 to 90 (GLR), Glu-98, and 123 to 129 (LSYISST) contribute to the ATP site.

The protein belongs to the bacterial CoaD family. In terms of assembly, homohexamer. Mg(2+) serves as cofactor.

It localises to the cytoplasm. It catalyses the reaction (R)-4'-phosphopantetheine + ATP + H(+) = 3'-dephospho-CoA + diphosphate. The protein operates within cofactor biosynthesis; coenzyme A biosynthesis; CoA from (R)-pantothenate: step 4/5. Its function is as follows. Reversibly transfers an adenylyl group from ATP to 4'-phosphopantetheine, yielding dephospho-CoA (dPCoA) and pyrophosphate. This is Phosphopantetheine adenylyltransferase from Marinobacter nauticus (strain ATCC 700491 / DSM 11845 / VT8) (Marinobacter aquaeolei).